Reading from the N-terminus, the 581-residue chain is Arginine--tRNA ligase (581 aa).

Positions Pro122–His132 match the 'HIGH' region motif.

It belongs to the class-I aminoacyl-tRNA synthetase family. In terms of assembly, monomer.

It is found in the cytoplasm. It catalyses the reaction tRNA(Arg) + L-arginine + ATP = L-arginyl-tRNA(Arg) + AMP + diphosphate. This is Arginine--tRNA ligase from Francisella tularensis subsp. novicida (strain U112).